We begin with the raw amino-acid sequence, 355 residues long: UDP-N-acetylglucosamine--N-acetylmuramyl-(pentapeptide) pyrophosphoryl-undecaprenol N-acetylglucosamine transferase (355 aa).

Residues 15–17, Asn-127, Arg-163, Ser-191, Ile-244, 263–268, and Gln-288 each bind UDP-N-acetyl-alpha-D-glucosamine; these read TGG and ALTVSE.

It belongs to the glycosyltransferase 28 family. MurG subfamily.

It localises to the cell inner membrane. The catalysed reaction is di-trans,octa-cis-undecaprenyl diphospho-N-acetyl-alpha-D-muramoyl-L-alanyl-D-glutamyl-meso-2,6-diaminopimeloyl-D-alanyl-D-alanine + UDP-N-acetyl-alpha-D-glucosamine = di-trans,octa-cis-undecaprenyl diphospho-[N-acetyl-alpha-D-glucosaminyl-(1-&gt;4)]-N-acetyl-alpha-D-muramoyl-L-alanyl-D-glutamyl-meso-2,6-diaminopimeloyl-D-alanyl-D-alanine + UDP + H(+). It functions in the pathway cell wall biogenesis; peptidoglycan biosynthesis. Functionally, cell wall formation. Catalyzes the transfer of a GlcNAc subunit on undecaprenyl-pyrophosphoryl-MurNAc-pentapeptide (lipid intermediate I) to form undecaprenyl-pyrophosphoryl-MurNAc-(pentapeptide)GlcNAc (lipid intermediate II). This is UDP-N-acetylglucosamine--N-acetylmuramyl-(pentapeptide) pyrophosphoryl-undecaprenol N-acetylglucosamine transferase from Sodalis glossinidius (strain morsitans).